Reading from the N-terminus, the 342-residue chain is Dihydroorotase (342 aa).

Residues His-13 and His-15 each contribute to the Zn(2+) site. Residues 15–17 and Asn-41 each bind substrate; that span reads HLR. Residues Lys-98, His-135, and His-173 each contribute to the Zn(2+) site. Lys-98 bears the N6-carboxylysine mark. A substrate-binding site is contributed by His-135. Leu-218 serves as a coordination point for substrate. Asp-246 contacts Zn(2+). Residue Asp-246 is part of the active site. Residues His-250 and Ala-262 each contribute to the substrate site.

Belongs to the metallo-dependent hydrolases superfamily. DHOase family. Class II DHOase subfamily. As to quaternary structure, homodimer. The cofactor is Zn(2+).

The enzyme catalyses (S)-dihydroorotate + H2O = N-carbamoyl-L-aspartate + H(+). It participates in pyrimidine metabolism; UMP biosynthesis via de novo pathway; (S)-dihydroorotate from bicarbonate: step 3/3. Its function is as follows. Catalyzes the reversible cyclization of carbamoyl aspartate to dihydroorotate. The sequence is that of Dihydroorotase from Aliivibrio fischeri (strain MJ11) (Vibrio fischeri).